Here is a 97-residue protein sequence, read N- to C-terminus: uncharacterized protein (97 aa).

This is an uncharacterized protein from Alcelaphine herpesvirus 1 (strain C500) (AlHV-1).